Here is a 313-residue protein sequence, read N- to C-terminus: NADH-ubiquinone oxidoreductase chain 2 (313 aa).

10 consecutive transmembrane segments (helical) span residues 3–23 (IWIITISILVSLSSNSWFIFW), 47–67 (SMITYFIIQSFSSSLFFISSF), 81–101 (INISVLIKLGMIPFHFWLIMI), 105–125 (LTFYSLLILLTIQKIIPLLII), 128–148 (FMNSLMIPLFIMSSLLASIMA), 153–173 (LIKQILIFSSISHQGWILCLI), 177–197 (MNFWVSYLMLYSIIIYSIIIN), 220–240 (NTMIMSMMSLAGMPPFIGFFM), 253–275 (LIFMMILIISSLINLFFYLRILT), and 293–313 (KSNFMIKINMLLLIILINIFF).

It belongs to the complex I subunit 2 family.

The protein resides in the mitochondrion inner membrane. It carries out the reaction a ubiquinone + NADH + 5 H(+)(in) = a ubiquinol + NAD(+) + 4 H(+)(out). In terms of biological role, core subunit of the mitochondrial membrane respiratory chain NADH dehydrogenase (Complex I) that is believed to belong to the minimal assembly required for catalysis. Complex I functions in the transfer of electrons from NADH to the respiratory chain. The immediate electron acceptor for the enzyme is believed to be ubiquinone. The polypeptide is NADH-ubiquinone oxidoreductase chain 2 (ND2) (Rhipicephalus sanguineus (Brown dog tick)).